The following is a 70-amino-acid chain: MFLIYLFVQTAESSWLSKTAKKLENSAKKRISEGIAIAIQGGPRRRRFVAEQDAIHSRVSREVPTLSDSV.

The first 13 residues, 1–13 (MFLIYLFVQTAES), serve as a signal peptide directing secretion. Positions 45–70 (RRRFVAEQDAIHSRVSREVPTLSDSV) are cleaved as a propeptide — removed in mature form.

In terms of tissue distribution, expressed in the body wall, intestine, uterus and ovary.

Its subcellular location is the secreted. Its function is as follows. Has antibacterial activity against several Gram-positive and Gram-negative bacteria. Is weakly active against yeasts. Acts by a nonpore mechanism. The chain is Cecropin-P1 (ASCEC-1) from Ascaris suum (Pig roundworm).